The primary structure comprises 404 residues: Histidine--tRNA ligase (404 aa).

Belongs to the class-II aminoacyl-tRNA synthetase family.

The protein resides in the cytoplasm. The enzyme catalyses tRNA(His) + L-histidine + ATP = L-histidyl-tRNA(His) + AMP + diphosphate + H(+). The protein is Histidine--tRNA ligase of Nanoarchaeum equitans (strain Kin4-M).